The primary structure comprises 234 residues: Thymidine kinase, cytosolic (234 aa).

A Phosphoserine modification is found at serine 13. Residues glycine 26–serine 33, aspartate 58–arginine 60, and aspartate 97–glutamine 100 each bind ATP. Catalysis depends on glutamate 98, which acts as the Proton acceptor. Phenylalanine 128 is a substrate binding site. Residues cysteine 153 and cysteine 156 each contribute to the Zn(2+) site. Substrate is bound by residues valine 172–glycine 176 and tyrosine 181. Zn(2+) contacts are provided by cysteine 185 and cysteine 188. The short motif at lysine 203–asparagine 205 is the KEN box element.

It belongs to the thymidine kinase family. As to quaternary structure, homotetramer. Tetramerization from dimerization is induced by ATP and increases catalytic efficiency due to a high affinity for thymidine. Tetramerization is inhibited by phosphorylation at Ser-13. Interacts (via the KEN box) with FZR1. Phosphorylated on Ser-13 in mitosis. Phosphorylation of Ser-13 by CDK1 during mitosis reduces homotetramerization and catalytic efficiency when DNA replication is complete and intracellular TK1 is still present at a high level. Post-translationally, polyubiquitinated. Postmitosis, ubiquitination leads to proteasomal degradation. The KEN box sequence located at the C-terminal region targets for degradation by the anaphase promoting complex (APC/C) activated and rate-limited by FZR1.

It localises to the cytoplasm. The catalysed reaction is thymidine + ATP = dTMP + ADP + H(+). Cell-cycle-regulated enzyme of importance in nucleotide metabolism. Catalyzes the first enzymatic step in the salvage pathway converting thymidine into thymidine monophosphate. Transcriptional regulation limits expression to the S phase of the cell cycle and transient expression coincides with the oscillation in the intracellular dTTP concentration. In Cricetulus griseus (Chinese hamster), this protein is Thymidine kinase, cytosolic (TK1).